Consider the following 274-residue polypeptide: RNA polymerase sigma factor SigI4 (274 aa).

The short motif at 87 to 100 (EEYSVGLMAFNEAI) is the Polymerase core binding element. The H-T-H motif DNA-binding region spans 226–245 (LSELMGLVNVHRKTVERNRK).

Belongs to the sigma-70 factor family. SigI subfamily. As to quaternary structure, interacts with RsgI4.

It is found in the cytoplasm. Its activity is regulated as follows. Negatively regulated by the anti-sigma-I factor RsgI4. Binding of the polysaccharide substrate to RsgI4 may lead to the release and activation of SigI4. Sigma factors are initiation factors that promote the attachment of RNA polymerase to specific initiation sites and are then released. This sigma factor is involved in regulation of cellulosomal genes via an external polysaccharide-sensing mechanism. The chain is RNA polymerase sigma factor SigI4 from Acetivibrio thermocellus (strain ATCC 27405 / DSM 1237 / JCM 9322 / NBRC 103400 / NCIMB 10682 / NRRL B-4536 / VPI 7372) (Clostridium thermocellum).